We begin with the raw amino-acid sequence, 173 residues long: Protein Rv3753c (173 aa).

This chain is Protein Rv3753c, found in Mycobacterium tuberculosis (strain ATCC 25618 / H37Rv).